A 518-amino-acid chain; its full sequence is F-box protein At1g47056 (518 aa).

The F-box domain occupies 37–82; the sequence is PDYTSSLPDECLALVFQFLNSGNRKRCALVCRRWMIVEGQNRYRLS.

This chain is F-box protein At1g47056, found in Arabidopsis thaliana (Mouse-ear cress).